Reading from the N-terminus, the 153-residue chain is RNA-binding protein 3 (153 aa).

The region spanning 6-84 (GKLFVGGLNF…RQIRVDHAGK (79 aa)) is the RRM domain. At Arg47 the chain carries Omega-N-methylarginine. Positions 81 to 153 (HAGKSARGSR…GGNYRDNYDN (73 aa)) are disordered. The segment covering 89 to 112 (SRGGAFGGRGRSYSRGGGDQGYGS) has biased composition (gly residues). Position 103 is an asymmetric dimethylarginine; alternate (Arg103). Residue Arg103 is modified to Dimethylated arginine; alternate. Omega-N-methylarginine; alternate is present on Arg103. Omega-N-methylarginine occurs at positions 118 and 128. A phosphoserine mark is found at Ser133 and Ser143. Position 151 is a phosphotyrosine (Tyr151).

Interacts with RPL4. Associates with the 60S ribosomal subunits in an RNA-independent manner. Arg-103 is dimethylated, probably to asymmetric dimethylarginine. In terms of processing, phosphorylated.

It localises to the nucleus. The protein localises to the cytoplasm. It is found in the cell projection. The protein resides in the dendrite. In terms of biological role, cold-inducible mRNA binding protein that enhances global protein synthesis at both physiological and mild hypothermic temperatures. Reduces the relative abundance of microRNAs, when overexpressed. Enhances phosphorylation of translation initiation factors and active polysome formation. This chain is RNA-binding protein 3 (Rbm3), found in Mus musculus (Mouse).